Consider the following 1298-residue polypeptide: Ras guanine nucleotide exchange factor Q (1298 aa).

5 disordered regions span residues 1–26, 46–88, 211–271, 314–384, and 459–533; these read MDIN…INNF, NNNI…SIEG, NISN…GPLK, YTPP…QQQQ, and LSNG…STTT. Low complexity-rich tracts occupy residues 211 to 245 and 315 to 384; these read NISN…NSNN and TPPS…QQQQ. Positions 352–389 form a coiled coil; it reads SSLNANNNTNNNNQQLQQQQQQQQQQQLQQQQQLTKSY. The span at 473 to 482 shows a compositional bias: polar residues; the sequence is LHLSTESTTS. Low complexity-rich tracts occupy residues 483–501 and 508–533; these read NNNN…NNNN and TTNS…STTT. The N-terminal Ras-GEF domain occupies 550-689; it reads DKDEVIAGER…YLKKAINDSG (140 aa). The region spanning 723–801 is the DEP domain; that stretch reads MSQSLQLKER…SSSSTTTTTT (79 aa). Disordered stretches follow at residues 781-864 and 884-920; these read SKSG…PNSI and GIAN…SNSF. Residues 783–864 show a composition bias toward low complexity; that stretch reads SGSSFSPSSS…ITSTSLPNSI (82 aa). Residues 964-1193 form the Ras-GEF domain; sequence HPVEIARQLT…YKASHMIEQP (230 aa). The interval 1214–1267 is disordered; that stretch reads TTTTTNNLNNNNNNNNPNNNNNNNNNSANNKSSPSPSPSSSPITSSPISSLTIN.

Its function is as follows. Promotes the exchange of Ras-bound GDP by GTP. Seems to play a role in chemotaxis. This is Ras guanine nucleotide exchange factor Q (gefQ) from Dictyostelium discoideum (Social amoeba).